The following is a 304-amino-acid chain: UDP-3-O-acyl-N-acetylglucosamine deacetylase (304 aa).

Zn(2+)-binding residues include histidine 77, histidine 233, and aspartate 237. Histidine 260 functions as the Proton donor in the catalytic mechanism.

The protein belongs to the LpxC family. Requires Zn(2+) as cofactor.

It catalyses the reaction a UDP-3-O-[(3R)-3-hydroxyacyl]-N-acetyl-alpha-D-glucosamine + H2O = a UDP-3-O-[(3R)-3-hydroxyacyl]-alpha-D-glucosamine + acetate. Its pathway is glycolipid biosynthesis; lipid IV(A) biosynthesis; lipid IV(A) from (3R)-3-hydroxytetradecanoyl-[acyl-carrier-protein] and UDP-N-acetyl-alpha-D-glucosamine: step 2/6. Catalyzes the hydrolysis of UDP-3-O-myristoyl-N-acetylglucosamine to form UDP-3-O-myristoylglucosamine and acetate, the committed step in lipid A biosynthesis. The chain is UDP-3-O-acyl-N-acetylglucosamine deacetylase from Lawsonia intracellularis (strain PHE/MN1-00).